The primary structure comprises 590 residues: Cytidine monophosphate-N-acetylneuraminic acid hydroxylase (590 aa).

The region spanning 14-112 is the Rieske domain; the sequence is LSPVEVANLK…VEMDENNGLL (99 aa). Residues cysteine 54, histidine 56, cysteine 75, and histidine 78 each contribute to the [2Fe-2S] cluster site.

This sequence belongs to the CMP-Neu5Ac hydroxylase family. [2Fe-2S] cluster serves as cofactor.

The protein resides in the cytoplasm. It catalyses the reaction CMP-N-acetyl-beta-neuraminate + 2 Fe(II)-[cytochrome b5] + O2 + 2 H(+) = CMP-N-glycoloyl-beta-neuraminate + 2 Fe(III)-[cytochrome b5] + H2O. It participates in amino-sugar metabolism; N-acetylneuraminate metabolism. Functionally, sialic acids are components of carbohydrate chains of glycoconjugates and are involved in cell-cell recognition and cell-pathogen interactions. Catalyzes the conversion of CMP-N-acetylneuraminic acid (CMP-Neu5Ac) into its hydroxylated derivative CMP-N-glycolylneuraminic acid (CMP-Neu5Gc), a sialic acid abundantly expressed at the surface of many cells. This is Cytidine monophosphate-N-acetylneuraminic acid hydroxylase (CMAH) from Macaca mulatta (Rhesus macaque).